Here is a 137-residue protein sequence, read N- to C-terminus: Small ribosomal subunit protein uS12 (137 aa).

The interval 1 to 57 (MPTINQLVRKPRKSKTKQSDSPVLNRGFNSKKKQFTNLNSPQKRGVCTRVGTMTPRK) is disordered. The residue at position 102 (Asp-102) is a 3-methylthioaspartic acid. Residues 118 to 137 (SGVDGRRQGRSLYGTKKPKN) are disordered.

The protein belongs to the universal ribosomal protein uS12 family. As to quaternary structure, part of the 30S ribosomal subunit. Contacts proteins S8 and S17. May interact with IF1 in the 30S initiation complex.

With S4 and S5 plays an important role in translational accuracy. Functionally, interacts with and stabilizes bases of the 16S rRNA that are involved in tRNA selection in the A site and with the mRNA backbone. Located at the interface of the 30S and 50S subunits, it traverses the body of the 30S subunit contacting proteins on the other side and probably holding the rRNA structure together. The combined cluster of proteins S8, S12 and S17 appears to hold together the shoulder and platform of the 30S subunit. The protein is Small ribosomal subunit protein uS12 of Staphylococcus epidermidis (strain ATCC 12228 / FDA PCI 1200).